The chain runs to 299 residues: 33 kDa chaperonin (299 aa).

Cystine bridges form between Cys-239-Cys-241 and Cys-272-Cys-275.

This sequence belongs to the HSP33 family. Under oxidizing conditions two disulfide bonds are formed involving the reactive cysteines. Under reducing conditions zinc is bound to the reactive cysteines and the protein is inactive.

It localises to the cytoplasm. In terms of biological role, redox regulated molecular chaperone. Protects both thermally unfolding and oxidatively damaged proteins from irreversible aggregation. Plays an important role in the bacterial defense system toward oxidative stress. The polypeptide is 33 kDa chaperonin (Acaryochloris marina (strain MBIC 11017)).